The chain runs to 457 residues: MTPRSRGPRRRPLDPARRAAFETLRAVSARDAYANLVLPALLAQRGIGGRDAAFATELTYGTCRARGLLDAVIGAAAERSPQAIDPVLLDLLRLGTYQLLRTRVDAHAAVSTTVEQAGIEFDSARAGFVNGVLRTIAGRDERSWVGELAPDAQNDPIGHAAFVHAHPRWIAQAFADALGAAVGELEAVLASDDERPAVHLAARPGVLTAGELARAVRGTVGRYSPFAVYLPRGDPGRLAPVRDGQALVQDEGSQLVARALTLAPVDGDTGRWLDLCAGPGGKTALLAGLGLQCAARVTAVEPSPHRADLVAQNTRGLPVELLRVDGRHTDLDPGFDRVLVDAPCTGLGALRRRPEARWRRQPADVAALAKLQRELLSAAIALTRPGGVVLYATCSPHLAETVGAVADALRRHPVHALDTRPLFEPVIAGLGEGPHVQLWPHRHGTDAMFAAALRRLT.

Residues 276 to 282, glutamate 301, aspartate 325, and aspartate 341 contribute to the S-adenosyl-L-methionine site; that span reads CAGPGGK. Cysteine 394 (nucleophile) is an active-site residue.

This sequence belongs to the class I-like SAM-binding methyltransferase superfamily. RsmB/NOP family.

Functionally, may act as RNA methyltransferase. The polypeptide is Putative methyltransferase MT1451 (Mycobacterium tuberculosis (strain CDC 1551 / Oshkosh)).